The following is a 127-amino-acid chain: Fluoride-specific ion channel FluC (127 aa).

4 helical membrane passes run 8 to 28 (LLIA…QYWF), 37 to 57 (PWGT…VYAI), 68 to 88 (WKFL…TFSY), and 100 to 120 (ILFL…AFAG). The Na(+) site is built by Gly-78 and Thr-81.

Belongs to the fluoride channel Fluc/FEX (TC 1.A.43) family.

Its subcellular location is the cell inner membrane. The enzyme catalyses fluoride(in) = fluoride(out). Its activity is regulated as follows. Na(+) is not transported, but it plays an essential structural role and its presence is essential for fluoride channel function. Functionally, fluoride-specific ion channel. Important for reducing fluoride concentration in the cell, thus reducing its toxicity. The protein is Fluoride-specific ion channel FluC of Leptospira interrogans serogroup Icterohaemorrhagiae serovar copenhageni (strain Fiocruz L1-130).